The sequence spans 160 residues: NADH-quinone oxidoreductase subunit B (160 aa).

Residues C37, C38, C102, and C132 each coordinate [4Fe-4S] cluster.

Belongs to the complex I 20 kDa subunit family. As to quaternary structure, NDH-1 is composed of 14 different subunits. Subunits NuoB, C, D, E, F, and G constitute the peripheral sector of the complex. Requires [4Fe-4S] cluster as cofactor.

The protein resides in the cell inner membrane. The catalysed reaction is a quinone + NADH + 5 H(+)(in) = a quinol + NAD(+) + 4 H(+)(out). Its function is as follows. NDH-1 shuttles electrons from NADH, via FMN and iron-sulfur (Fe-S) centers, to quinones in the respiratory chain. Couples the redox reaction to proton translocation (for every two electrons transferred, four hydrogen ions are translocated across the cytoplasmic membrane), and thus conserves the redox energy in a proton gradient. This chain is NADH-quinone oxidoreductase subunit B, found in Neisseria meningitidis serogroup A / serotype 4A (strain DSM 15465 / Z2491).